The chain runs to 80 residues: Defensin-like protein 1 (80 aa).

An N-terminal signal peptide occupies residues 1 to 29 (MAKFASIIALLFAALVLFAAFEAPTMVEA). Glutamine 30 carries the post-translational modification Pyrrolidone carboxylic acid. Intrachain disulfides connect cysteine 33-cysteine 80, cysteine 44-cysteine 65, cysteine 50-cysteine 74, and cysteine 54-cysteine 76.

It belongs to the DEFL family. Forms oligomers in its native state.

It is found in the secreted. Possesses antifungal activity sensitive to inorganic cations. In Raphanus sativus (Radish), this protein is Defensin-like protein 1 (AFP1).